The chain runs to 458 residues: DNA repair protein RadA (458 aa).

A C4-type zinc finger spans residues 10–27 (CQSCGYESPKWMGKCPGC). Position 98–105 (98–105 (GDPGIGKS)) interacts with ATP. The RadA KNRFG motif signature appears at 255 to 259 (KNRFG). Residues 354–458 (DAYLKVAGGV…AEALRTSLGG (105 aa)) are lon-protease-like.

This sequence belongs to the RecA family. RadA subfamily. As to quaternary structure, interacts with DisA.

In terms of biological role, DNA-dependent ATPase involved in processing of recombination intermediates, plays a role in repairing DNA breaks. Stimulates the branch migration of RecA-mediated strand transfer reactions, allowing the 3' invading strand to extend heteroduplex DNA faster. Binds ssDNA in the presence of ADP but not other nucleotides, has ATPase activity that is stimulated by ssDNA and various branched DNA structures, but inhibited by SSB. Does not have RecA's homology-searching function. Plays a role in DNA repair. Might stabilize or process Holliday junction intermediates. May work with DisA following methyl methanesulfonate (MMS) but not H(2)O(2) damage; DisA is a DNA integrity scanning protein with c-di-AMP synthase activity. The polypeptide is DNA repair protein RadA (Bacillus subtilis (strain 168)).